The chain runs to 87 residues: Small ribosomal subunit protein uS15 (87 aa).

It belongs to the universal ribosomal protein uS15 family. Part of the 30S ribosomal subunit. Forms a bridge to the 50S subunit in the 70S ribosome, contacting the 23S rRNA.

Functionally, one of the primary rRNA binding proteins, it binds directly to 16S rRNA where it helps nucleate assembly of the platform of the 30S subunit by binding and bridging several RNA helices of the 16S rRNA. In terms of biological role, forms an intersubunit bridge (bridge B4) with the 23S rRNA of the 50S subunit in the ribosome. This is Small ribosomal subunit protein uS15 from Alkaliphilus oremlandii (strain OhILAs) (Clostridium oremlandii (strain OhILAs)).